The sequence spans 325 residues: Biotin synthase (325 aa).

Residues 42-270 (YKVQLASLLS…QSRVRLSAGR (229 aa)) form the Radical SAM core domain. The [4Fe-4S] cluster site is built by Cys-57, Cys-61, and Cys-64. [2Fe-2S] cluster contacts are provided by Cys-101, Cys-133, Cys-193, and Arg-265.

It belongs to the radical SAM superfamily. Biotin synthase family. Homodimer. [4Fe-4S] cluster serves as cofactor. Requires [2Fe-2S] cluster as cofactor.

The catalysed reaction is (4R,5S)-dethiobiotin + (sulfur carrier)-SH + 2 reduced [2Fe-2S]-[ferredoxin] + 2 S-adenosyl-L-methionine = (sulfur carrier)-H + biotin + 2 5'-deoxyadenosine + 2 L-methionine + 2 oxidized [2Fe-2S]-[ferredoxin]. It functions in the pathway cofactor biosynthesis; biotin biosynthesis; biotin from 7,8-diaminononanoate: step 2/2. Its function is as follows. Catalyzes the conversion of dethiobiotin (DTB) to biotin by the insertion of a sulfur atom into dethiobiotin via a radical-based mechanism. The sequence is that of Biotin synthase from Synechococcus sp. (strain WH7803).